Consider the following 288-residue polypeptide: Co-chaperone protein DjlA (288 aa).

Topologically, residues 1 to 6 (MNFIGK) are periplasmic. Residues 7–30 (ILGFIIGYRFGGLFGGIAGLILGH) form a helical membrane-spanning segment. The Cytoplasmic segment spans residues 31–288 (IADKKLYELG…DLICKVKGWK (258 aa)). The region spanning 222-288 (DAYKVLGVNA…DLICKVKGWK (67 aa)) is the J domain.

Homodimer.

The protein resides in the cell inner membrane. In terms of biological role, regulatory DnaK co-chaperone. Direct interaction between DnaK and DjlA is needed for the induction of the wcaABCDE operon, involved in the synthesis of a colanic acid polysaccharide capsule, possibly through activation of the RcsB/RcsC phosphotransfer signaling pathway. The colanic acid capsule may help the bacterium survive conditions outside the host. This is Co-chaperone protein DjlA from Mannheimia succiniciproducens (strain KCTC 0769BP / MBEL55E).